We begin with the raw amino-acid sequence, 304 residues long: Beta-lactamase-like protein str6 (304 aa).

Belongs to the beta-lactamase family.

The protein operates within mycotoxin biosynthesis. Functionally, beta-lactamase-like protein; part of the gene cluster that mediates the biosynthesis of strobilurin A, an antifungal polyketide that contains a key beta-methoxyacrylate toxophore that targets the complex III of the mitochondrial electron transport chain. Strobilurin biosynthesis begins with construction of benzoyl CoA by step-wise elimination of ammonia from phenylalanine by the phenylalanine ammonia-lyase str11, oxygenation by str8 and retro-Claisen reaction to form benzoic acid, which is activated to its CoA thiolester benzoyl CoA by the dedicated CoA ligase str10. Benzoyl CoA forms the starter unit for the highly reducing polyketide synthase stpks1 that produces the polyketide prestrobilutin A. The FAD-dependent oxygenase str9 then catalyzes the key oxidative rearrangement responsible for the creation of the beta-methoxyacrylate toxophore. Str9 performs epoxidation of the 2,3 olefin of prestrobilutin A, followed by Meinwald rearrangement to furnish the aldehyde intermediate. Rapid enolization of the aldehyde intermediate would give the beta-methoxyacrylate skeleton and methylations catalyzed by str2 and str3 complete the synthesis and lead to the production of strobilurin A. The short-chain dehydrogenase stl2 and the dehydrogenase str4 play a role in the shunt pathway leading to the production of bolineol. The cluster encodes no obvious halogenase gene that could be involved in production of strobilurin B, nor any obvious dimethylallyl-transferase that could be involved in the production of strobilurin G. It is possible that unknown proteins encoded in, or near, the cluster (such as str1 or stl1) may form new classes of halogenases or dimethylally-transferases, or that the responsible genes are located elsewhere on the genome. Similarly, proteins encoded by str5/str6 hydrolases appear to have no chemical role in the biosynthesis of strobilurin A. Finally, no obvious self-resistance gene is found within the cluster. This chain is Beta-lactamase-like protein str6, found in Strobilurus tenacellus.